The chain runs to 963 residues: Isoleucine--tRNA ligase (963 aa).

A 'HIGH' region motif is present at residues 66 to 76 (PYANGDIHIGH). Glu-596 is an L-isoleucyl-5'-AMP binding site. The 'KMSKS' region motif lies at 637–641 (KMSKS). Position 640 (Lys-640) interacts with ATP. Residues Cys-926, Cys-929, Cys-946, and Cys-949 each contribute to the Zn(2+) site.

Belongs to the class-I aminoacyl-tRNA synthetase family. IleS type 1 subfamily. As to quaternary structure, monomer. Zn(2+) is required as a cofactor.

It is found in the cytoplasm. It carries out the reaction tRNA(Ile) + L-isoleucine + ATP = L-isoleucyl-tRNA(Ile) + AMP + diphosphate. Functionally, catalyzes the attachment of isoleucine to tRNA(Ile). As IleRS can inadvertently accommodate and process structurally similar amino acids such as valine, to avoid such errors it has two additional distinct tRNA(Ile)-dependent editing activities. One activity is designated as 'pretransfer' editing and involves the hydrolysis of activated Val-AMP. The other activity is designated 'posttransfer' editing and involves deacylation of mischarged Val-tRNA(Ile). The protein is Isoleucine--tRNA ligase of Cupriavidus pinatubonensis (strain JMP 134 / LMG 1197) (Cupriavidus necator (strain JMP 134)).